The primary structure comprises 333 residues: Protein-methionine-sulfoxide reductase catalytic subunit MsrP (333 aa).

Residues 1–43 (MSKQRKLTEADVTPESVFYQRRKVLQALGITAASLALPHNAQA) constitute a signal peptide (tat-type signal). Mo-molybdopterin is bound by residues Asn87, 90–91 (YE), Cys145, Thr180, Asn232, Arg237, and 248–250 (GIK).

This sequence belongs to the MsrP family. As to quaternary structure, heterodimer of a catalytic subunit (MsrP) and a heme-binding subunit (MsrQ). Mo-molybdopterin serves as cofactor. Post-translationally, predicted to be exported by the Tat system. The position of the signal peptide cleavage has not been experimentally proven.

The protein localises to the periplasm. The enzyme catalyses L-methionyl-[protein] + a quinone + H2O = L-methionyl-(S)-S-oxide-[protein] + a quinol. The catalysed reaction is L-methionyl-[protein] + a quinone + H2O = L-methionyl-(R)-S-oxide-[protein] + a quinol. Functionally, part of the MsrPQ system that repairs oxidized periplasmic proteins containing methionine sulfoxide residues (Met-O), using respiratory chain electrons. Thus protects these proteins from oxidative-stress damage caused by reactive species of oxygen and chlorine generated by the host defense mechanisms. MsrPQ is essential for the maintenance of envelope integrity under bleach stress, rescuing a wide series of structurally unrelated periplasmic proteins from methionine oxidation. The catalytic subunit MsrP is non-stereospecific, being able to reduce both (R-) and (S-) diastereoisomers of methionine sulfoxide. The protein is Protein-methionine-sulfoxide reductase catalytic subunit MsrP of Serratia proteamaculans (strain 568).